The following is a 145-amino-acid chain: Small ribosomal subunit protein uS15 (145 aa).

The protein belongs to the universal ribosomal protein uS15 family. In terms of assembly, part of the 30S ribosomal subunit.

The sequence is that of Small ribosomal subunit protein uS15 from Thermoplasma acidophilum (strain ATCC 25905 / DSM 1728 / JCM 9062 / NBRC 15155 / AMRC-C165).